The following is a 702-amino-acid chain: Soluble guanylate cyclase gcy-31 (702 aa).

Heme is bound at residue H104. A coiled-coil region spans residues 368–406; it reads TQQSAELKLLLHQEAQKSRNMRENMNRLKKERRRTDKLL. The Guanylate cyclase domain occupies 435–564; that stretch reads TILFTDIVEF…ETVYVANKME (130 aa). Positions 440 and 484 each coordinate Mg(2+). Positions 614–702 are disordered; sequence RHGPHRVPSP…QDLTPRKSIT (89 aa). The span at 633–643 shows a compositional bias: acidic residues; sequence SQTEDDDDDEL. The span at 683-695 shows a compositional bias: polar residues; sequence RNSNKTPRQSQDL.

This sequence belongs to the adenylyl cyclase class-4/guanylyl cyclase family. Heterodimer; with other soluble guanylate cyclases. It depends on heme as a cofactor. Expressed in a pair of bilaterally symmetric neurons in the head.

Its subcellular location is the cytoplasm. The catalysed reaction is GTP = 3',5'-cyclic GMP + diphosphate. Its activity is regulated as follows. May be regulated by molecular oxygen. Probably not activated by nitric oxide (NO). Its function is as follows. Synthesizes cyclic GMP (cGMP) from GTP. May play a role in embryogenesis. This is Soluble guanylate cyclase gcy-31 (gcy-31) from Caenorhabditis elegans.